Reading from the N-terminus, the 83-residue chain is Kunitz-type serine protease inhibitor scutellin-4 (83 aa).

The signal sequence occupies residues Met-1–Ser-24. The 51-residue stretch at Cys-31–Cys-81 folds into the BPTI/Kunitz inhibitor domain. 3 disulfide bridges follow: Cys-31/Cys-81, Cys-40/Cys-64, and Cys-56/Cys-77.

Belongs to the venom Kunitz-type family. Expressed by the venom gland.

It is found in the secreted. In terms of biological role, serine protease inhibitor. The chain is Kunitz-type serine protease inhibitor scutellin-4 from Oxyuranus scutellatus scutellatus (Australian taipan).